The following is a 359-amino-acid chain: Proton-coupled zinc antiporter SLC30A2 (359 aa).

The Cytoplasmic portion of the chain corresponds to 1-56; the sequence is MASRSFFGALWKSEASRIPPVNLPSVELAVQSNHYCHAQKDSGSHPNSEKQRARRK. Positions 34-37 match the Mitochondrial localization signal motif; sequence HYCH. C36 lines the Zn(2+) pocket. The helical transmembrane segment at 57–77 threads the bilayer; it reads LYVASAICLVFMIGEIIGGYL. At 78–86 the chain is on the lumenal side; the sequence is AQSLAIMTD. The chain crosses the membrane as a helical span at residues 87-107; that stretch reads AAHLLTDFASMLISLFSLWVS. Zn(2+) is bound by residues H89 and D93. The Cytoplasmic segment spans residues 108-123; sequence SRPATKTMNFGWQRAE. A helical membrane pass occupies residues 124–144; sequence ILGALLSVLSIWVVTGVLVYL. Topologically, residues 145–159 are lumenal; it reads AVQRLISGDYEIKGD. The chain crosses the membrane as a helical span at residues 160–180; the sequence is TMLITSGCAVAVNIIMGLALH. The Cytoplasmic segment spans residues 181 to 207; that stretch reads QSGHGHSHGHSHEDSSQQQQNPSVRAA. Residues 208–228 traverse the membrane as a helical segment; that stretch reads FIHVVGDLLQSVGVLVAAYII. The Zn(2+) site is built by H210 and D214. The Lumenal portion of the chain corresponds to 229–236; the sequence is YFKPEYKY. The helical transmembrane segment at 237-257 threads the bilayer; sequence VDPICTFLFSILVLGTTLTIL. Topologically, residues 258-291 are cytoplasmic; that stretch reads RDVILVLMEGTPKGVDFTTVKNLLLSVDGVEALH. Positions 281-282 match the Lysosomal targeting motif motif; it reads LL. A Phosphoserine modification is found at S283. 3 residues coordinate Zn(2+): H291, H308, and E342. Residues 292–312 traverse the membrane as a helical segment; it reads SLHIWALTVAQPVLSVHIAIA. At 313-359 the chain is on the lumenal side; that stretch reads QNVDAQAVLKVARDRLQGKFNFHTMTIQIESYSEDMKSCQECQGPSE.

The protein belongs to the cation diffusion facilitator (CDF) transporter (TC 2.A.4) family. SLC30A subfamily. As to quaternary structure, homodimer. Interacts (via lysosomal targeting motif) with AP3D1; in AP-3-mediated transport to lysosomes. Interacts with TMEM163. Phosphorylated at Ser-283. Phosphorylation at Ser-283 prevents localization to lysosomes. Dephosphorylation of Ser-283 which triggers localization to lysosomes, accumulation of zinc into lysosomes and lysosomal-mediated cell death is induced by TNF-alpha. In terms of tissue distribution, detected in intestine, kidney, seminal vesicles and testis.

It localises to the cytoplasmic vesicle. It is found in the secretory vesicle membrane. The protein resides in the zymogen granule membrane. Its subcellular location is the endosome membrane. The protein localises to the lysosome membrane. It localises to the mitochondrion inner membrane. It catalyses the reaction Zn(2+)(in) + 2 H(+)(out) = Zn(2+)(out) + 2 H(+)(in). Functionally, electroneutral proton-coupled antiporter concentrating zinc ions into a variety of intracellular organelles including endosomes, zymogen granules and mitochondria. Thereby, plays a crucial role in cellular zinc homeostasis to confer upon cells protection against its potential cytotoxicity. Regulates the zinc concentration of milk, through the transport of zinc ions into secretory vesicles of mammary cells. By concentrating zinc ions into lysosomes participates to lysosomal-mediated cell death during early mammary gland involution. This Rattus norvegicus (Rat) protein is Proton-coupled zinc antiporter SLC30A2.